An 84-amino-acid polypeptide reads, in one-letter code: U4-theraphotoxin-Hhn1a (84 aa).

The signal sequence occupies residues 1-22; that stretch reads MKVTLIAILTCAAVLVLHTTAA. Residues 23–47 constitute a propeptide that is removed on maturation; it reads EELEESQLMEVGMPDTELEAVDEER. 3 disulfide bridges follow: cysteine 51-cysteine 65, cysteine 55-cysteine 76, and cysteine 70-cysteine 81.

It belongs to the neurotoxin 12 (Hwtx-2) family. 02 (Hwtx-2) subfamily. Expressed by the venom gland.

The protein localises to the secreted. Its function is as follows. Postsynaptic neurotoxin. The protein is U4-theraphotoxin-Hhn1a of Cyriopagopus hainanus (Chinese bird spider).